The sequence spans 110 residues: Large ribosomal subunit protein uL22 (110 aa).

Belongs to the universal ribosomal protein uL22 family. As to quaternary structure, part of the 50S ribosomal subunit.

Its function is as follows. This protein binds specifically to 23S rRNA; its binding is stimulated by other ribosomal proteins, e.g. L4, L17, and L20. It is important during the early stages of 50S assembly. It makes multiple contacts with different domains of the 23S rRNA in the assembled 50S subunit and ribosome. The globular domain of the protein is located near the polypeptide exit tunnel on the outside of the subunit, while an extended beta-hairpin is found that lines the wall of the exit tunnel in the center of the 70S ribosome. The sequence is that of Large ribosomal subunit protein uL22 from Maridesulfovibrio salexigens (strain ATCC 14822 / DSM 2638 / NCIMB 8403 / VKM B-1763) (Desulfovibrio salexigens).